A 208-amino-acid chain; its full sequence is Uracil phosphoribosyltransferase (208 aa).

5-phospho-alpha-D-ribose 1-diphosphate-binding positions include arginine 78, arginine 103, and 130–138 (DPMLATGGS). Uracil-binding positions include isoleucine 193 and 198-200 (GDA). Aspartate 199 lines the 5-phospho-alpha-D-ribose 1-diphosphate pocket.

Belongs to the UPRTase family. Mg(2+) serves as cofactor.

The enzyme catalyses UMP + diphosphate = 5-phospho-alpha-D-ribose 1-diphosphate + uracil. It functions in the pathway pyrimidine metabolism; UMP biosynthesis via salvage pathway; UMP from uracil: step 1/1. Its activity is regulated as follows. Allosterically activated by GTP. Functionally, catalyzes the conversion of uracil and 5-phospho-alpha-D-ribose 1-diphosphate (PRPP) to UMP and diphosphate. This Neisseria meningitidis serogroup A / serotype 4A (strain DSM 15465 / Z2491) protein is Uracil phosphoribosyltransferase.